The primary structure comprises 239 residues: Putative antitoxin VapB45 (239 aa).

Functionally, possibly the antitoxin component of a type II toxin-antitoxin (TA) system. Its cognate toxin is VapC45. The chain is Putative antitoxin VapB45 from Mycobacterium tuberculosis (strain ATCC 25618 / H37Rv).